The primary structure comprises 326 residues: Pyruvate dehydrogenase E1 component subunit alpha (326 aa).

Heterodimer of an alpha and a beta chain. Requires thiamine diphosphate as cofactor.

The enzyme catalyses N(6)-[(R)-lipoyl]-L-lysyl-[protein] + pyruvate + H(+) = N(6)-[(R)-S(8)-acetyldihydrolipoyl]-L-lysyl-[protein] + CO2. Functionally, the pyruvate dehydrogenase complex catalyzes the overall conversion of pyruvate to acetyl-CoA and CO(2). It contains multiple copies of three enzymatic components: pyruvate dehydrogenase (E1), dihydrolipoamide acetyltransferase (E2) and lipoamide dehydrogenase (E3). The chain is Pyruvate dehydrogenase E1 component subunit alpha (pdhA) from Rickettsia bellii (strain RML369-C).